Reading from the N-terminus, the 467-residue chain is UDP-N-acetylmuramate--L-alanine ligase (467 aa).

Position 114–120 (114–120 (GTHGKTT)) interacts with ATP.

This sequence belongs to the MurCDEF family.

Its subcellular location is the cytoplasm. It carries out the reaction UDP-N-acetyl-alpha-D-muramate + L-alanine + ATP = UDP-N-acetyl-alpha-D-muramoyl-L-alanine + ADP + phosphate + H(+). It participates in cell wall biogenesis; peptidoglycan biosynthesis. In terms of biological role, cell wall formation. The protein is UDP-N-acetylmuramate--L-alanine ligase of Rhodopseudomonas palustris (strain TIE-1).